Here is a 570-residue protein sequence, read N- to C-terminus: MITGNEFYTVMCAMAPLYFAMFVAYGSVKWCKIFTPAQCSGINRFVSVFAVPVLSFHFISQNNPYKMDTMFILADTLSKIFVFVLLSLWAVFFKAGGLDWLITLFSIATLPNTLVMGIPLLQAMYGDYTQTLMVQLVVLQCIIWYTLLLFLFELRAARLLIRAEFPGQAAGSIAKIQVDDDVISLDGMDPLRTETETDVNGRIRLRIRRSVSSVPDSVMSSSLCLTPRASNLSNAEIFSVNTPNNRFFHGGGGSGTLQFYNGSNEIMFCNGDLGGFGFTRPGLGASPRRLSGYASSDAYSLQPTPRASNFNELDVNGNGTPVWMKSPAAGRIYRQSSPKMMWESGQRHAAKDINGSVPEKEISFRDALKAAPQATAAGGGASMEEGAAGKDTTPVAAIGKQEMPSAIVMMRLILTVVGRKLSRNPNTYSSLLGLVWSLISFKWNIPMPNIVDFSIKIISDAGLGMAMFSLGLFMALQPKMIPCGAKKATMGMLIRFISGPLFMAGASLLVGLRGSRLHAAIVQAALPQGIVPFVFAREYNLHPDLLSTLVIFGMIVSLPVTILYYVLLGL.

Residues 1–6 lie on the Extracellular side of the membrane; that stretch reads MITGNE. A helical transmembrane segment spans residues 7-27; that stretch reads FYTVMCAMAPLYFAMFVAYGS. Over 28 to 38 the chain is Cytoplasmic; the sequence is VKWCKIFTPAQ. A helical transmembrane segment spans residues 39 to 59; it reads CSGINRFVSVFAVPVLSFHFI. Residue Val51 coordinates (indol-3-yl)acetate. Residues 60-70 are Extracellular-facing; sequence SQNNPYKMDTM. A helical membrane pass occupies residues 71-91; it reads FILADTLSKIFVFVLLSLWAV. Residues 92–100 lie on the Cytoplasmic side of the membrane; that stretch reads FFKAGGLDW. Residues 101–121 form a helical membrane-spanning segment; the sequence is LITLFSIATLPNTLVMGIPLL. (indol-3-yl)acetate contacts are provided by Asn112 and Leu114. The Extracellular portion of the chain corresponds to 122-131; the sequence is QAMYGDYTQT. A helical membrane pass occupies residues 132-152; it reads LMVQLVVLQCIIWYTLLLFLF. Tyr145 contributes to the (indol-3-yl)acetate binding site. The Cytoplasmic portion of the chain corresponds to 153–430; it reads ELRAARLLIR…LSRNPNTYSS (278 aa). Phosphoserine is present on residues Ser230 and Ser308. Residues 431–451 traverse the membrane as a helical segment; sequence LLGLVWSLISFKWNIPMPNIV. Residues 452 to 454 lie on the Extracellular side of the membrane; that stretch reads DFS. Residues 455–475 form a helical membrane-spanning segment; that stretch reads IKIISDAGLGMAMFSLGLFMA. At 476 to 491 the chain is on the cytoplasmic side; it reads LQPKMIPCGAKKATMG. The chain crosses the membrane as a helical span at residues 492–512; it reads MLIRFISGPLFMAGASLLVGL. Over 513-515 the chain is Extracellular; the sequence is RGS. The helical transmembrane segment at 516 to 536 threads the bilayer; that stretch reads RLHAAIVQAALPQGIVPFVFA. Ile530 and Val531 together coordinate (indol-3-yl)acetate. Residues 537–549 lie on the Cytoplasmic side of the membrane; sequence REYNLHPDLLSTL. Residues 550–570 form a helical membrane-spanning segment; that stretch reads VIFGMIVSLPVTILYYVLLGL.

Belongs to the auxin efflux carrier (TC 2.A.69.1) family. In terms of assembly, homodimer. As to expression, expressed in the vasculature of the primary root, cotyledons, floral stem, sepals and the main transmitting tract of the reproductive silique. Expressed in embryos, shoot meristem, root tip and lateral root meristems. Expressed in the nectaries and the floral organ boundaries of the anthers. Detected in pollen. Expressed in broad subepidermal domains that narrowed to sites of vein formation. Expressed in veins of mature leaves.

The protein localises to the endoplasmic reticulum membrane. In terms of biological role, component of the intracellular auxin-transport pathway. Regulates auxin transport and auxin homeostasis. Directly involved in the regulation of nectar production. Involved in unfolded protein response (UPR) activation. Involved in the control of vein patterning. Redundantly with PIN8, inhibits the vein-formation-promoting functions of PIN5. PIN5, PIN6, and PIN8 control vein network geometry, but they are expressed in mutually exclusive domains of leaf vascular cells. This is Auxin efflux carrier component 6 from Arabidopsis thaliana (Mouse-ear cress).